Here is a 131-residue protein sequence, read N- to C-terminus: Translation initiation factor 5A (131 aa).

Lys36 is subject to Hypusine.

The protein belongs to the eIF-5A family.

The protein localises to the cytoplasm. In terms of biological role, functions by promoting the formation of the first peptide bond. The chain is Translation initiation factor 5A from Sulfurisphaera tokodaii (strain DSM 16993 / JCM 10545 / NBRC 100140 / 7) (Sulfolobus tokodaii).